The chain runs to 339 residues: tRNA-splicing endonuclease (339 aa).

Residues Y274, H285, and K316 contribute to the active site.

It belongs to the tRNA-intron endonuclease family. Archaeal long subfamily. Homodimer. Ca(2+) is required as a cofactor. Requires Mg(2+) as cofactor. Post-translationally, the N-terminus is blocked.

The enzyme catalyses pretRNA = a 3'-half-tRNA molecule with a 5'-OH end + a 5'-half-tRNA molecule with a 2',3'-cyclic phosphate end + an intron with a 2',3'-cyclic phosphate and a 5'-hydroxyl terminus.. Endonuclease that removes tRNA introns. Cleaves pre-tRNA at the 5'- and 3'-splice sites to release the intron. The products are an intron and two tRNA half-molecules bearing 2',3' cyclic phosphate and 5'-OH termini. Recognizes a pseudosymmetric substrate in which 2 bulged loops of 3 bases are separated by a stem of 4 bp. This chain is tRNA-splicing endonuclease, found in Haloferax volcanii (strain ATCC 29605 / DSM 3757 / JCM 8879 / NBRC 14742 / NCIMB 2012 / VKM B-1768 / DS2) (Halobacterium volcanii).